The following is a 221-amino-acid chain: Glutathione peroxidase 6 (221 aa).

The first 19 residues, 1–19 (MTQQFWGPCLFSLFMAVLA), serve as a signal peptide directing secretion. Cysteine 73 is a catalytic residue.

This sequence belongs to the glutathione peroxidase family. As to expression, expressed in the Bowman glands.

The protein resides in the secreted. The enzyme catalyses 2 glutathione + H2O2 = glutathione disulfide + 2 H2O. The chain is Glutathione peroxidase 6 (Gpx6) from Rattus norvegicus (Rat).